We begin with the raw amino-acid sequence, 233 residues long: MKTIVVCSGGLDSVSLAHMVAAQGGLTRLISFDYGQRHRKELDYAALAARRLGVPHHVIDMRGVGAVLTGSALTGGAEVPDGHYAEETMRITVVPNRNAIMLTVAFGMAAAMGDQAVATAVHGGDHFIYPDCRPAFTQAFQQMQDAALDGYAQARLLTPFVHRTKADIVTEGARHDTPFAETWSCYKGGALHCGRCGTCVERREAFHLAGIPDPTAYEDADFWRQAIAERERA.

Cys7–Ala17 serves as a coordination point for ATP. The Zn(2+) site is built by Cys185, Cys193, Cys196, and Cys199.

The protein belongs to the QueC family. Zn(2+) is required as a cofactor.

It catalyses the reaction 7-carboxy-7-deazaguanine + NH4(+) + ATP = 7-cyano-7-deazaguanine + ADP + phosphate + H2O + H(+). The protein operates within purine metabolism; 7-cyano-7-deazaguanine biosynthesis. Catalyzes the ATP-dependent conversion of 7-carboxy-7-deazaguanine (CDG) to 7-cyano-7-deazaguanine (preQ(0)). The sequence is that of 7-cyano-7-deazaguanine synthase from Paracoccus denitrificans (strain Pd 1222).